The primary structure comprises 396 residues: Proteasome-activating nucleotidase (396 aa).

Positions 16 to 57 (ITYLKRRIRQLELQVRMLEADKERLERELSRLRSEMSRLRQP) form a coiled coil. Residues 181-186 (GCGKTL) and histidine 320 contribute to the ATP site. The interval 394-396 (IYG) is docks into pockets in the proteasome alpha-ring to cause gate opening.

This sequence belongs to the AAA ATPase family. As to quaternary structure, homohexamer. The hexameric complex has a two-ring architecture resembling a top hat that caps the 20S proteasome core at one or both ends. Upon ATP-binding, the C-terminus of PAN interacts with the alpha-rings of the proteasome core by binding to the intersubunit pockets.

The protein resides in the cytoplasm. In terms of biological role, ATPase which is responsible for recognizing, binding, unfolding and translocation of substrate proteins into the archaeal 20S proteasome core particle. Is essential for opening the gate of the 20S proteasome via an interaction with its C-terminus, thereby allowing substrate entry and access to the site of proteolysis. Thus, the C-termini of the proteasomal ATPase function like a 'key in a lock' to induce gate opening and therefore regulate proteolysis. Unfolding activity requires energy from ATP hydrolysis, whereas ATP binding alone promotes ATPase-20S proteasome association which triggers gate opening, and supports translocation of unfolded substrates. This is Proteasome-activating nucleotidase from Pyrococcus abyssi (strain GE5 / Orsay).